We begin with the raw amino-acid sequence, 539 residues long: Dihydrolipoyllysine-residue acetyltransferase component 2 of pyruvate dehydrogenase complex, mitochondrial (539 aa).

The N-terminal 102 residues, 1-102 (MASRIINHSK…SSQMRSVRGF (102 aa)), are a transit peptide targeting the mitochondrion. Residues 102–122 (FSSSSDLPPHQEIGMPSLSPT) form a disordered region. Residues 111–187 (HQEIGMPSLS…QVGEVIAITV (77 aa)) enclose the Lipoyl-binding domain. N6-lipoyllysine is present on Lys152. The segment at 196–244 (FKDYTPSSDTGPAAPEAKPAPSLPKEEKVEKPASAPEAKISKPSSAPSE) is disordered. Residues 248 to 285 (FASPLARKLAEDNNVPLSSIKGTGPEGRIVKADVEDFL) enclose the Peripheral subunit-binding (PSBD) domain. Active-site residues include His512 and Asp516.

It belongs to the 2-oxoacid dehydrogenase family. (R)-lipoate serves as cofactor.

The protein localises to the mitochondrion matrix. It carries out the reaction N(6)-[(R)-dihydrolipoyl]-L-lysyl-[protein] + acetyl-CoA = N(6)-[(R)-S(8)-acetyldihydrolipoyl]-L-lysyl-[protein] + CoA. Functionally, the pyruvate dehydrogenase complex catalyzes the overall conversion of pyruvate to acetyl-CoA and CO(2). It contains multiple copies of three enzymatic components: pyruvate dehydrogenase (E1), dihydrolipoamide acetyltransferase (E2) and lipoamide dehydrogenase (E3). The chain is Dihydrolipoyllysine-residue acetyltransferase component 2 of pyruvate dehydrogenase complex, mitochondrial from Arabidopsis thaliana (Mouse-ear cress).